Reading from the N-terminus, the 168-residue chain is SPbeta prophage-derived uncharacterized protein YonX (168 aa).

Residues 1–53 adopt a coiled-coil conformation; the sequence is MNAQLFNLESRLDELENEINTQYCELDTNLDALKSNRIELESQLEKFESSLTN.

The sequence is that of SPbeta prophage-derived uncharacterized protein YonX (yonX) from Bacillus subtilis (strain 168).